Consider the following 74-residue polypeptide: uncharacterized protein (74 aa).

The signal sequence occupies residues 1-19 (MNPGFDAVDQETAAAQAVA).

This is an uncharacterized protein from Mycobacterium tuberculosis (strain ATCC 25618 / H37Rv).